Here is a 732-residue protein sequence, read N- to C-terminus: MAFLSSTLHSLGIFEKISRIKEVLKNRLLDLTKRRDQAREQQRKRPHTIIQGLLLWSLPVSWIRFLWRQPGEFPVTAFLLGAGTGGLLAIGLFQLLVNPMNIYEEQKVVALYCLASLGAIGWGTSPHIRCASLLLVPKMLGKEGRLFVMGYALAAIYSGPAANLRSNINEVIASLGCTVELQINNTRSAWRVSTAPLRAVFKGMVGSKDSLNKEIQNVSTSFEEMDEQVKSDAGYSSEDWDKNRESTEMFGTSRVRPYLSTQMVYELRTRLRCIHVVNKAILSCYRWFDKKHKNCMRRIHLPLFNNMICVPMKFKFLCNIAKVIEIWCYKRIPVEGNFGQTYDSVNQSIHGLSGEFSANINLKEEKQSSMVGLNTTNWEHMGTEVRDYVRQQETYLQWAMGLLHVLLSCTFLLVFHSAFSYMDHYNWDIRFDNIYISTYFCQIDARRKKLGKQSLLPLRKAERKTVIFPFKATIQAWEMRYVIRELLETLPIVLLLLVLCAIDWALYSVFDTIRQHSFVQYSFRSSHKLEIKVEGDSILAKLLRKTIGALNTSSSTDVETNNMPCLPQPISLNARDYFKASLPTLLLVCLCLAQAFGYRLRRVIAAFYFPKREKKRALFFYNEFLKKRSAFTKLRRAAIVRRANQQKAPPHYLVEALYRRCPLLHRFMRQRCVVCQAMETPDSYVCPTPDCKALYCRSCWDDMQRLCPVCTPREELSSSAHSDSNDDAVYGD.

Topologically, residues 1–46 (MAFLSSTLHSLGIFEKISRIKEVLKNRLLDLTKRRDQAREQQRKRP) are cytoplasmic. A helical membrane pass occupies residues 47–67 (HTIIQGLLLWSLPVSWIRFLW). Over 68 to 76 (RQPGEFPVT) the chain is Extracellular. The helical transmembrane segment at 77–97 (AFLLGAGTGGLLAIGLFQLLV) threads the bilayer. Over 98 to 107 (NPMNIYEEQK) the chain is Cytoplasmic. A helical transmembrane segment spans residues 108-128 (VVALYCLASLGAIGWGTSPHI). The Extracellular portion of the chain corresponds to 129-394 (RCASLLLVPK…VRDYVRQQET (266 aa)). Residues N184, N217, N346, and N374 are each glycosylated (N-linked (GlcNAc...) asparagine). The helical transmembrane segment at 395–415 (YLQWAMGLLHVLLSCTFLLVF) threads the bilayer. Over 416 to 489 (HSAFSYMDHY…RYVIRELLET (74 aa)) the chain is Cytoplasmic. Residues 490–510 (LPIVLLLLVLCAIDWALYSVF) form a helical membrane-spanning segment. Residues 511-576 (DTIRQHSFVQ…PQPISLNARD (66 aa)) lie on the Extracellular side of the membrane. The N-linked (GlcNAc...) asparagine glycan is linked to N551. A helical membrane pass occupies residues 577–597 (YFKASLPTLLLVCLCLAQAFG). At 598–732 (YRLRRVIAAF…DSNDDAVYGD (135 aa)) the chain is on the cytoplasmic side. The segment at 672-711 (CVVCQAMETPDSYVCPTPDCKALYCRSCWDDMQRLCPVCT) adopts an RING-type; degenerate zinc-finger fold.

In terms of assembly, interacts with STAT2; the interaction results in STAT2 'Lys-48'-linked ubiquitination leading to its proteasomal degradation. Interacts with DCST2. As to expression, expressed in testis.

It localises to the cell membrane. The protein localises to the cytoplasmic vesicle. Its subcellular location is the secretory vesicle. The protein resides in the acrosome membrane. The catalysed reaction is S-ubiquitinyl-[E2 ubiquitin-conjugating enzyme]-L-cysteine + [acceptor protein]-L-lysine = [E2 ubiquitin-conjugating enzyme]-L-cysteine + N(6)-ubiquitinyl-[acceptor protein]-L-lysine.. Its pathway is protein modification; protein ubiquitination. Functionally, E3 ubiquitin-protein ligase which mediates 'Lys-48'-linked ubiquitination of STAT2 and induces its proteasomal degradation thereby negatively regulating type-I-interferon signaling. Its function is as follows. Essential sperm cell-surface protein required for sperm-egg fusion and fertilization. The polypeptide is E3 ubiquitin-protein ligase DCST1 (Dcst1) (Mus musculus (Mouse)).